The chain runs to 454 residues: Mediator of RNA polymerase II transcription subunit 1 (454 aa).

The protein belongs to the Mediator complex subunit 1 family. In terms of assembly, component of the Mediator complex.

Its subcellular location is the nucleus. In terms of biological role, component of the Mediator complex, a coactivator involved in the regulated transcription of nearly all RNA polymerase II-dependent genes. Mediator functions as a bridge to convey information from gene-specific regulatory proteins to the basal RNA polymerase II transcription machinery. Mediator is recruited to promoters by direct interactions with regulatory proteins and serves as a scaffold for the assembly of a functional preinitiation complex with RNA polymerase II and the general transcription factors. The protein is Mediator of RNA polymerase II transcription subunit 1 (med1) of Schizosaccharomyces pombe (strain 972 / ATCC 24843) (Fission yeast).